The chain runs to 1140 residues: Calcium-activated potassium channel slo-1 (1140 aa).

Residues 1-44 (MGEIYSPSQSKGFNQPYGYPMNCNLSRVFMEMTEEDRKCLEERK) lie on the Extracellular side of the membrane. A helical transmembrane segment spans residues 45–65 (YWCFLLSSITTFCASMILVVI). Residues 66-139 (WRVVTHLCCQ…LISGQSLTGR (74 aa)) are Cytoplasmic-facing. Residues 140-161 (FLVLLVFILSIGSLIIYFYDAS) traverse the membrane as a helical segment. The Extracellular portion of the chain corresponds to 162 to 178 (FQNFQVETCIPWQDSPS). A helical membrane pass occupies residues 179 to 199 (QQIDLGFNIFFLVYFFIRFIA). At 200-203 (ASDK) the chain is on the cytoplasmic side. The helical transmembrane segment at 204 to 224 (VWFLLEMYSWIDFFTIPPSFV) threads the bilayer. Over 225 to 228 (AIYL) the chain is Extracellular. The chain crosses the membrane as a helical; Voltage-sensor span at residues 229–249 (QRNWLGFRFLRALRLMTVPDI). Residues 250-264 (LQYLNILKTSSSIRL) lie on the Cytoplasmic side of the membrane. Residues 265-285 (TQLVTIFVAVCLTGAGLVHLL) traverse the membrane as a helical segment. Residues 286–299 (ENSGDFFKGFINPH) are Extracellular-facing. Positions 300–322 (RITYADSVYFVLVTMSTVGYGDI) form an intramembrane region, pore-forming. Residues 316-319 (TVGY) carry the Selectivity for potassium motif. Residues 323–331 (YCTTLCGRL) are Extracellular-facing. A helical transmembrane segment spans residues 332-352 (FMIFFILFGLAMFASYVPEIA). Topologically, residues 353 to 1140 (DLIGNRQKYG…LEYEPGKRHF (788 aa)) are cytoplasmic. The RCK N-terminal 1 domain occupies 371-514 (KKHIVVCGHI…DWKRGDDVIC (144 aa)). The tract at residues 520-540 (LGFIAQSCLAPGFSTMMANLF) is segment S7. The interval 578–598 (MTFPEAVDLLFNRLGLLLLAI) is segment S8. The segment at 797-817 (VLNGHVVVCLFADQDSPLIGL) is segment S9. Residues 799–953 (NGHVVVCLFA…GAKFGTNVPM (155 aa)) form the RCK N-terminal 2 domain. The Calcium bowl motif lies at 955-977 (TELVNDSNVQFLDQDDDDDPDTE). Positions 964, 967, 970, and 972 each coordinate Ca(2+). The segment at 984-1004 (FACGTAFAISVLDSLMSTTYF) is segment S10.

This sequence belongs to the potassium channel family. Calcium-activated (TC 1.A.1.3) subfamily. Slo sub-subfamily. As to quaternary structure, homotetramer; which constitutes the calcium-activated potassium channel. In terms of processing, phosphorylated. In terms of tissue distribution, expressed in synaptic regions of the nervous system including in both the nerve ring and nerve cords, as well as in the body-wall and vulval muscle. Expressed broadly in motor neurons. Forms puncta at presynaptic terminals of neurons, muscle excitation sites, and in the dorsal nerve cord.

Its subcellular location is the cell membrane. It is found in the synapse. Potassium channel activated by both membrane depolarization or increase in cytosolic Ca(2+) that mediates export of K(+). Its activation dampens the excitatory events that elevate the cytosolic Ca(2+) concentration and/or depolarize the cell membrane. It therefore contributes to repolarization of the membrane potential. Essential for the regulation of neurotransmitter release at synapses. Regulates longevity and age-associated decline in motor activity in mid-late life, by acting in motor neurons and through daf-16 in the intestine. When clustered in neurons, mediates ethanol-induced suppression of locomotory and egg-laying behaviors. The sequence is that of Calcium-activated potassium channel slo-1 from Caenorhabditis elegans.